Reading from the N-terminus, the 49-residue chain is Disintegrin ocellatin (49 aa).

The Disintegrin domain occupies 1 to 47 (DCESGPCCDNCKFLKEGTICKMARGDNMHHYCNGKTCDCPRNPYKGE). 4 disulfides stabilise this stretch: C2–C11, C7–C32, C8–C37, and C20–C39. The Cell attachment site motif lies at 24 to 26 (RGD).

It belongs to the venom metalloproteinase (M12B) family. P-II subfamily. P-IIa sub-subfamily. Monomer. In terms of tissue distribution, expressed by the venom gland.

Its subcellular location is the secreted. In terms of biological role, inhibits ADP-induced human platelet aggregation. This chain is Disintegrin ocellatin, found in Echis ocellatus (Ocellated saw-scaled viper).